Consider the following 862-residue polypeptide: uncharacterized protein (862 aa).

Disordered stretches follow at residues 45-91 (HPPV…PDEV), 633-824 (RAEQ…GDDD), and 837-862 (GGSGFLTSTAGRNRKSNKQSKTLLLS). Acidic residues-rich tracts occupy residues 57–69 (MDVDAESEDEKDE) and 78–91 (PEVESEADEDPDEV). Basic and acidic residues-rich tracts occupy residues 633-650 (RAEQKASKESAKGEDAAK), 657-686 (REAEAGTETPKKKQKEEKSEKPKKTGKAEK), and 694-703 (TKKEKTEKKT). The segment covering 751-760 (EKKKRTAAKK) has biased composition (basic residues). Residues 761–779 (KTVDRPSGHRPSSKKEYRS) show a composition bias toward basic and acidic residues.

This is an uncharacterized protein from Ictaluridae (bullhead catfishes).